The primary structure comprises 400 residues: MSSQAFPAEEDHHNEERQTKKKRKTKHRHKFSEELLQELKEIFGENGYPDFTTRKTLANKFDCPVNVINNWFQNNRARLPPEERQRIFLTWKKHDFPVQACPFLSLQETQAAASNYATEQSFSCAKRALMRRPGCSLLEKQRIACQQMGYNCFSLENQETPSQQVGSMCSSLEKQGIPSQQVGSQCSYLVAGTEKHPGYALEYGGDTGSEHSTAYRFLSYNSAECLHPPPSSVPYFHGERTETRESQHASPFLLDYAQGAYGVKKDHCLCSFCLSLLQEQQQNDWQYHPQQHQQPQNYSEGMMLQEQLPMDSGPWDLEKQWPSAQSQLQSQLPQNNGKPLCSQLQHVPPQIAANSPLLPLGQDMQVGASSNSGLKCSSFRLRGLHGPATGTQGCSFAKYC.

The tract at residues 1–29 (MSSQAFPAEEDHHNEERQTKKKRKTKHRH) is disordered. The span at 9-18 (EEDHHNEERQ) shows a compositional bias: basic and acidic residues. The segment covering 19-29 (TKKKRKTKHRH) has biased composition (basic residues). The homeobox DNA-binding region spans 24–83 (KTKHRHKFSEELLQELKEIFGENGYPDFTTRKTLANKFDCPVNVINNWFQNNRARLPPEE).

Its subcellular location is the nucleus. The chain is Cytoplasmic polyadenylated homeobox-like protein 2 from Homo sapiens (Human).